The sequence spans 530 residues: Seeligeriolysin (530 aa).

A signal peptide spans 1-25 (MKIFGLVIMSLLFVSLPITQQPEAR). Residues 36-55 (TISPAETPESPPATPKTPVE) are disordered. The next 4 beta stranded transmembrane spans lie at 215 to 228 (ESQL…AFKA), 235 to 244 (VNFEAISDGK), 313 to 322 (SNKVKTAFEA), and 330 to 342 (KGDV…IKNS). Positions 484–494 (ECTGLFWEWWR) match the Conserved undecapeptide motif. The Cholesterol binding signature appears at 516–517 (TL).

This sequence belongs to the cholesterol-dependent cytolysin family. Homooligomeric pore complex of 35 to 50 subunits; when inserted in the host membrane.

It localises to the secreted. The protein resides in the host cell membrane. In terms of biological role, a cholesterol-dependent toxin that causes cytolysis by forming pores in cholesterol containing host membranes. L.seeligeri is non-pathogenic, perhaps in part because this protein is about 25% as toxic as listeriolysin O. Mutating a single residue in the undecapeptide increases toxicity 2-fold. After binding to target membranes, the protein undergoes a major conformation change, leading to its insertion in the host membrane and formation of an oligomeric pore complex. Cholesterol is required for binding to host membranes, membrane insertion and pore formation; cholesterol binding is mediated by a Thr-Leu pair in the C-terminus. Can be reversibly inactivated by oxidation. This chain is Seeligeriolysin, found in Listeria seeligeri.